The chain runs to 190 residues: Dynactin subunit 6 (190 aa).

Thr186 bears the Phosphothreonine; by CDK1 mark.

It belongs to the dynactin subunits 5/6 family. Dynactin subunit 6 subfamily. In terms of assembly, subunit of dynactin, a multiprotein complex part of a tripartite complex with dynein and a adapter, such as BICDL1, BICD2 or HOOK3. The dynactin complex is built around ACTR1A/ACTB filament and consists of an actin-related filament composed of a shoulder domain, a pointed end and a barbed end. Its length is defined by its flexible shoulder domain. The soulder is composed of 2 DCTN1 subunits, 4 DCTN2 and 2 DCTN3. The 4 DCNT2 (via N-terminus) bind the ACTR1A filament and act as molecular rulers to determine the length. The pointed end is important for binding dynein-dynactin cargo adapters. Consists of 4 subunits: ACTR10, DCNT4, DCTN5 and DCTN6. Within the complex DCTN6 forms a heterodimer with DCTN5. The barbed end is composed of a CAPZA1:CAPZB heterodimers, which binds ACTR1A/ACTB filament and dynactin and stabilizes dynactin. Interacts with PLK1. Interacts with N4BP2L1. Phosphorylation at Thr-186 by CDK1 during mitotic prometaphase creates a binding site for PLK1 that facilitates its recruitment to kinetochores. Ubiquitous.

The protein resides in the cytoplasm. It localises to the cytoskeleton. It is found in the chromosome. Its subcellular location is the centromere. The protein localises to the kinetochore. In terms of biological role, part of the dynactin complex that activates the molecular motor dynein for ultra-processive transport along microtubules. The protein is Dynactin subunit 6 of Homo sapiens (Human).